The primary structure comprises 130 residues: MNFIFLWAALGGAIGSSLRYFVGKMMPSKFLMFESFPLGTFSVNVIGCFVIGFMGHLAVKKVFGDDFGIFFVTGVLGGFTTFSSYGLDTLKLLQKSQYIEAVSYALGTNILGLIGVAIGWFLAKNFVGIN.

The next 4 helical transmembrane spans lie at 3 to 23 (FIFL…YFVG), 39 to 59 (GTFS…HLAV), 67 to 87 (FGIF…SYGL), and 102 to 122 (VSYA…GWFL). Residues glycine 77 and threonine 80 each contribute to the Na(+) site.

Belongs to the fluoride channel Fluc/FEX (TC 1.A.43) family.

It localises to the cell inner membrane. The enzyme catalyses fluoride(in) = fluoride(out). Na(+) is not transported, but it plays an essential structural role and its presence is essential for fluoride channel function. In terms of biological role, fluoride-specific ion channel. Important for reducing fluoride concentration in the cell, thus reducing its toxicity. This is Fluoride-specific ion channel FluC from Helicobacter pylori (strain Shi470).